The sequence spans 242 residues: Alpha-aspartyl dipeptidase (242 aa).

Active-site charge relay system residues include Ser-125, Asp-140, and His-162.

It belongs to the peptidase S51 family.

Its subcellular location is the cytoplasm. It catalyses the reaction Dipeptidase E catalyzes the hydrolysis of dipeptides Asp-|-Xaa. It does not act on peptides with N-terminal Glu, Asn or Gln, nor does it cleave isoaspartyl peptides.. Its function is as follows. Hydrolyzes dipeptides containing N-terminal aspartate residues. The chain is Alpha-aspartyl dipeptidase (aad-a) from Xenopus laevis (African clawed frog).